The sequence spans 226 residues: Large ribosomal subunit protein mL67 (226 aa).

It belongs to the mitochondrion-specific ribosomal protein mL67 family. As to quaternary structure, component of the mitochondrial large ribosomal subunit (mt-LSU). Mature yeast 74S mitochondrial ribosomes consist of a small (37S) and a large (54S) subunit. The 37S small subunit contains a 15S ribosomal RNA (15S mt-rRNA) and 34 different proteins. The 54S large subunit contains a 21S rRNA (21S mt-rRNA) and 46 different proteins.

The protein localises to the nucleus. The protein resides in the mitochondrion. Functionally, component of the mitochondrial ribosome (mitoribosome), a dedicated translation machinery responsible for the synthesis of mitochondrial genome-encoded proteins, including at least some of the essential transmembrane subunits of the mitochondrial respiratory chain. The mitoribosomes are attached to the mitochondrial inner membrane and translation products are cotranslationally integrated into the membrane. mL67/MHR1 also has extraribosomal functions, being involved in regulation of mitochondrial DNA recombination, maintenance and repair, and generation of homoplasmic cells. mL67/MHR1 also acts as transcription factor involved in regulation of RNA polymerase II-dependent transcription. The protein is Large ribosomal subunit protein mL67 (MHR1) of Saccharomyces cerevisiae (strain ATCC 204508 / S288c) (Baker's yeast).